The following is a 176-amino-acid chain: NAD(P)H-quinone oxidoreductase subunit 6, chloroplastic (176 aa).

5 consecutive transmembrane segments (helical) span residues 10–30 (ILLV…VLLT), 32–52 (PISS…FYIP), 61–81 (AQLL…VMFM), 92–112 (LWTI…FSLI), and 152–172 (FYLP…GAIA).

This sequence belongs to the complex I subunit 6 family. As to quaternary structure, NDH is composed of at least 16 different subunits, 5 of which are encoded in the nucleus.

The protein localises to the plastid. It localises to the chloroplast thylakoid membrane. It carries out the reaction a plastoquinone + NADH + (n+1) H(+)(in) = a plastoquinol + NAD(+) + n H(+)(out). The catalysed reaction is a plastoquinone + NADPH + (n+1) H(+)(in) = a plastoquinol + NADP(+) + n H(+)(out). In terms of biological role, NDH shuttles electrons from NAD(P)H:plastoquinone, via FMN and iron-sulfur (Fe-S) centers, to quinones in the photosynthetic chain and possibly in a chloroplast respiratory chain. The immediate electron acceptor for the enzyme in this species is believed to be plastoquinone. Couples the redox reaction to proton translocation, and thus conserves the redox energy in a proton gradient. The sequence is that of NAD(P)H-quinone oxidoreductase subunit 6, chloroplastic (ndhG) from Chloranthus spicatus (Chulantree).